Reading from the N-terminus, the 167-residue chain is MSEASIAKKAELVDAVAEKMKAAVSIVVVDSRGLTVEQDTVLRRNLRESAVEFKVIKNSILRRAAEKAGLEGFDDIFTGPSAVAFSNEDVVAPAKIINDFAKDAEALEIKGGAIEGAVSTKEEIQALAALPNREGLLSMLLSVLQAPVRNVAYAVKAVAESKDEDAA.

It belongs to the universal ribosomal protein uL10 family. Part of the ribosomal stalk of the 50S ribosomal subunit. The N-terminus interacts with L11 and the large rRNA to form the base of the stalk. The C-terminus forms an elongated spine to which L12 dimers bind in a sequential fashion forming a multimeric L10(L12)X complex.

Forms part of the ribosomal stalk, playing a central role in the interaction of the ribosome with GTP-bound translation factors. This is Large ribosomal subunit protein uL10 from Streptococcus mutans serotype c (strain ATCC 700610 / UA159).